We begin with the raw amino-acid sequence, 483 residues long: Probable cysteine protease ATG4 (483 aa).

The Nucleophile role is filled by C141. Active-site residues include D315 and H317.

Belongs to the peptidase C54 family.

It is found in the cytoplasm. The protein localises to the nucleus. It localises to the preautophagosomal structure. It catalyses the reaction [protein]-C-terminal L-amino acid-glycyl-phosphatidylethanolamide + H2O = [protein]-C-terminal L-amino acid-glycine + a 1,2-diacyl-sn-glycero-3-phosphoethanolamine. Its function is as follows. Cysteine protease that plays a key role in cytoplasm to vacuole transport (Cvt) and autophagy by mediating both proteolytic activation and delipidation of ATG8. Required for selective autophagic degradation of the nucleus (nucleophagy) as well as for mitophagy which contributes to regulate mitochondrial quantity and quality by eliminating the mitochondria to a basal level to fulfill cellular energy requirements and preventing excess ROS production. The protease activity is required for proteolytic activation of ATG8: cleaves the C-terminal amino acid of ATG8 to reveal a C-terminal glycine. ATG8 ubiquitin-like activity requires the exposure of the glycine at the C-terminus for its conjugation to phosphatidylethanolamine (PE) and its insertion to membranes, which is necessary for autophagy. The ATG8-PE conjugate mediates tethering between adjacent membranes and stimulates membrane hemifusion, leading to expansion of the autophagosomal membrane during autophagy. In addition to the protease activity, also catalyzes deconjugation of PE-conjugated forms of ATG8 during macroautophagy: ATG8 delipidation is required to release the protein from membranes, which facilitates multiple events during macroautophagy, and especially for efficient autophagosome biogenesis, the assembly of ATG9-containing tubulovesicular clusters into phagophores/autophagosomes, and for the disassembly of PAS-associated ATG components. ATG8 delipidation by ATG4 also recycles ATG8-PE generated on inappropriate membranes to maintain a reservoir of unlipidated ATG8 that is required for autophagosome formation at the PAS. The chain is Probable cysteine protease ATG4 (ATG4) from Candida glabrata (strain ATCC 2001 / BCRC 20586 / JCM 3761 / NBRC 0622 / NRRL Y-65 / CBS 138) (Yeast).